The sequence spans 332 residues: Adenosine deaminase (332 aa).

Zn(2+) is bound by residues His-12 and His-14. 3 residues coordinate substrate: His-14, Asp-16, and Gly-170. Residue His-197 participates in Zn(2+) binding. Catalysis depends on Glu-200, which acts as the Proton donor. A Zn(2+)-binding site is contributed by Asp-278.

It belongs to the metallo-dependent hydrolases superfamily. Adenosine and AMP deaminases family. Adenosine deaminase subfamily. It depends on Zn(2+) as a cofactor.

It catalyses the reaction adenosine + H2O + H(+) = inosine + NH4(+). It carries out the reaction 2'-deoxyadenosine + H2O + H(+) = 2'-deoxyinosine + NH4(+). In terms of biological role, catalyzes the hydrolytic deamination of adenosine and 2-deoxyadenosine. This is Adenosine deaminase from Clostridium perfringens (strain SM101 / Type A).